Consider the following 200-residue polypeptide: UPF0637 protein LCABL_14170 (200 aa).

The protein belongs to the UPF0637 family.

This chain is UPF0637 protein LCABL_14170, found in Lacticaseibacillus casei (strain BL23) (Lactobacillus casei).